Consider the following 513-residue polypeptide: MPHLLEMKNITKAFGAVKAVDNVSLTLEAGQVLSLCGENGSGKSTLMKVLCAIYPHGSYDGQIIFSGDELRANHIRDTEQKGIAIIHQELALVKEMTVLENMFLGNEWTRFGVMDYDNMYLRCQRMLEQVKLAVDPNTKVGELGLGQQQLVEIAKALNKQVRLLVLDEPTASLTERETGILLEIIQDLRDHGIACIYISHKLNEVKAISDVICVIRDGKHIGTRPAAELSEDHIIAMMVGRELTELYPNEPHVIGEEVLRVEHLTAWHPVNRHIRRVDDVSFALHRGEILGIAGLVGSGRTETVQCLFGAYRGRWQGDIFIDGKPVTISNCQQAMAQGIAMVPEDRKKDGIVPVMGVAQNMTLAALDQFTGPLSMLDDAREQDIIRQSLANLKVKTSSPELAIARLSGGNQQKAVLAKCLLLNPRILILDEPTRGIDIGAKYEIYKLINALVKQHIAVIVISSELPEVLGLSDRVLVMHQGRIKADLINRDLTQEQVMEAALRSEHRAENIAV.

ABC transporter domains are found at residues 5-242 and 259-505; these read LEMK…VGRE and LRVE…LRSE. 37-44 is a binding site for ATP; the sequence is GENGSGKS.

It belongs to the ABC transporter superfamily. Xylose importer (TC 3.A.1.2.4) family. As to quaternary structure, the complex is composed of two ATP-binding proteins (XylG), two transmembrane proteins (XylH) and a solute-binding protein (XylF).

The protein localises to the cell inner membrane. It carries out the reaction D-xylose(out) + ATP + H2O = D-xylose(in) + ADP + phosphate + H(+). Part of the ABC transporter complex XylFGH involved in xylose import. Responsible for energy coupling to the transport system. The protein is Xylose import ATP-binding protein XylG of Pectobacterium atrosepticum (strain SCRI 1043 / ATCC BAA-672) (Erwinia carotovora subsp. atroseptica).